Reading from the N-terminus, the 150-residue chain is Deoxyuridine 5'-triphosphate nucleotidohydrolase (150 aa).

Substrate-binding positions include 69-71 (RSG), Asn-82, 86-88 (LID), and Lys-96.

This sequence belongs to the dUTPase family. Mg(2+) is required as a cofactor.

It catalyses the reaction dUTP + H2O = dUMP + diphosphate + H(+). It functions in the pathway pyrimidine metabolism; dUMP biosynthesis; dUMP from dCTP (dUTP route): step 2/2. Its function is as follows. This enzyme is involved in nucleotide metabolism: it produces dUMP, the immediate precursor of thymidine nucleotides and it decreases the intracellular concentration of dUTP so that uracil cannot be incorporated into DNA. This chain is Deoxyuridine 5'-triphosphate nucleotidohydrolase, found in Neisseria meningitidis serogroup A / serotype 4A (strain DSM 15465 / Z2491).